The primary structure comprises 718 residues: Adhesin-like cell surface protein MAD1 (718 aa).

An N-terminal signal peptide occupies residues 1–19 (MKGAIQFLGALAAVQAVSA). 9 repeat units span residues 217–243 (PCTEYSCTATDTTTEPAPTEPAPTEPA), 244–265 (PCTEYSCTATDTTTEPAPTEPA), 266–282 (PCTEYSCTATDTTTEPA), 283–309 (PCTEYSCTATDTTTEPAPTEPAPTEPA), 310–336 (PCTEYSCTATDTTTEPAPTEPAPTEPA), 337–358 (PCTEYSCTATDTTTEPAPTEPA), 359–382 (PCTEYSCTATETTSEAVPTTTDEA), 383–402 (PCTDYSCTATEAVPTTTDEA), and 403–420 (PCTEYSCTGVPTSEAVPT). A disordered region spans residues 452-472 (TSIPYETPSPSETETLPPSGT). In terms of domain architecture, CFEM spans 462-575 (SETETLPPSG…VTLPPVTTGA (114 aa)). Cystine bridges form between C494/C526, C504/C512, and C514/C548. Position 509 (D509) interacts with heme. G693 is lipidated: GPI-anchor amidated glycine. A propeptide spans 694–718 (AASSFKAFSTVMLAGVIGLTALIMA) (removed in mature form).

Belongs to the RBT5 family. The GPI-anchor is attached to the protein in the endoplasmic reticulum and serves to target the protein to the cell surface. There, the glucosamine-inositol phospholipid moiety is cleaved off and the GPI-modified mannoprotein is covalently attached via its lipidless GPI glycan remnant to the 1,6-beta-glucan of the outer cell wall layer.

The protein localises to the secreted. It localises to the cell wall. It is found in the cell membrane. Functionally, cell surface adhesion protein that plays a key role in switching between the saprophytic lifestyle and the predacious lifestyle (nematode trapping). Likely functions to prevent energy-consuming trap formation in the absence of nematodes, and keeps the fungus in the saprophytic life style. May influence the induction signal of trap formation by limiting the porosity of the cell wall and thus affecting its permeability of nitrogen source. The protein is Adhesin-like cell surface protein MAD1 of Arthrobotrys oligospora (strain ATCC 24927 / CBS 115.81 / DSM 1491) (Nematode-trapping fungus).